The primary structure comprises 238 residues: Ribonuclease Rh (238 aa).

Positions 1–16 (MKAVLALATLIGSTLA) are cleaved as a signal peptide. 5 disulfide bridges follow: Cys-19–Cys-36, Cys-26–Cys-69, Cys-35–Cys-136, Cys-79–Cys-128, and Cys-198–Cys-229. Catalysis depends on residues His-62, Glu-121, and His-125.

This sequence belongs to the RNase T2 family.

The catalysed reaction is a ribonucleotidyl-ribonucleotide-RNA + H2O = a 3'-end 3'-phospho-ribonucleotide-RNA + a 5'-end dephospho-ribonucleoside-RNA + H(+). In terms of biological role, this is a base non-specific ribonuclease. The chain is Ribonuclease Rh from Rhizopus niveus.